A 223-amino-acid polypeptide reads, in one-letter code: Bone marrow proteoglycan (223 aa).

The first 16 residues, Met-1–Ala-16, serve as a signal peptide directing secretion. Positions Leu-17–Lys-106 are cleaved as a propeptide — acidic. The interval Ser-20–Gln-81 is disordered. O-linked (GalNAc...) threonine; partial glycosylation is present at Thr-23. An O-linked (GalNAc...) serine glycan is attached at Ser-24. O-linked (Xyl...) (chondroitin sulfate) serine glycosylation is present at Ser-66. The region spanning Ser-124–Tyr-223 is the C-type lectin domain. Disulfide bonds link Cys-126-Cys-221 and Cys-198-Cys-213.

Nitrated.

The protein localises to the secreted. Cytotoxin and helminthotoxin. MBP also induces non-cytolytic histamine release from basophils. It is involved in antiparasitic defense mechanisms and immune hypersensitivity reactions. This Mus musculus (Mouse) protein is Bone marrow proteoglycan (Prg2).